The sequence spans 273 residues: Vitamin B12-binding protein (273 aa).

An N-terminal signal peptide occupies residues Met-1 to Ala-18. The Fe/B12 periplasmic-binding domain occupies Arg-23–Arg-273. A disulfide bridge connects residues Cys-183 and Cys-263.

The protein belongs to the BtuF family. In terms of assembly, the complex is composed of two ATP-binding proteins (BtuD), two transmembrane proteins (BtuC) and a solute-binding protein (BtuF).

Its subcellular location is the periplasm. In terms of biological role, part of the ABC transporter complex BtuCDF involved in vitamin B12 import. Binds vitamin B12 and delivers it to the periplasmic surface of BtuC. This is Vitamin B12-binding protein from Vibrio vulnificus (strain CMCP6).